A 121-amino-acid polypeptide reads, in one-letter code: Nitrogen fixation nifHD region GlnB-like protein 2 (121 aa).

This sequence belongs to the P(II) protein family.

Could be involved in the regulation of nitrogen fixation. This Methanothermobacter marburgensis (strain ATCC BAA-927 / DSM 2133 / JCM 14651 / NBRC 100331 / OCM 82 / Marburg) (Methanobacterium thermoautotrophicum) protein is Nitrogen fixation nifHD region GlnB-like protein 2 (glnBB).